A 131-amino-acid polypeptide reads, in one-letter code: Nitrogenase-stabilizing/protective protein NifW (131 aa).

This sequence belongs to the NifW family. As to quaternary structure, homotrimer; associates with NifD.

Functionally, may protect the nitrogenase Fe-Mo protein from oxidative damage. The polypeptide is Nitrogenase-stabilizing/protective protein NifW (Frankia alni (strain DSM 45986 / CECT 9034 / ACN14a)).